The chain runs to 129 residues: Small ribosomal subunit protein uS11 (129 aa).

The protein belongs to the universal ribosomal protein uS11 family. Part of the 30S ribosomal subunit. Interacts with proteins S7 and S18. Binds to IF-3.

Located on the platform of the 30S subunit, it bridges several disparate RNA helices of the 16S rRNA. Forms part of the Shine-Dalgarno cleft in the 70S ribosome. In Histophilus somni (strain 129Pt) (Haemophilus somnus), this protein is Small ribosomal subunit protein uS11.